Reading from the N-terminus, the 244-residue chain is LexA repressor (244 aa).

The segment at 1 to 24 (MSDSSDTTVDGASDGASDGASGAD) is disordered. Over residues 10–24 (DGASDGASDGASGAD) the composition is skewed to low complexity. Positions 58–78 (IREIGDAVGLTSTSSVAHQLR) form a DNA-binding region, H-T-H motif. Active-site for autocatalytic cleavage activity residues include S168 and K205.

It belongs to the peptidase S24 family. As to quaternary structure, homodimer.

The enzyme catalyses Hydrolysis of Ala-|-Gly bond in repressor LexA.. Functionally, represses a number of genes involved in the response to DNA damage (SOS response), including recA and lexA. In the presence of single-stranded DNA, RecA interacts with LexA causing an autocatalytic cleavage which disrupts the DNA-binding part of LexA, leading to derepression of the SOS regulon and eventually DNA repair. The polypeptide is LexA repressor (Mycobacterium ulcerans (strain Agy99)).